Reading from the N-terminus, the 414-residue chain is Dihydroorotase (414 aa).

Residues His57 and His59 each coordinate Zn(2+). Substrate is bound by residues 59 to 61 and Asn91; that span reads HLR. Zn(2+)-binding residues include Lys135, His164, His204, and Asp272. An N6-carboxylysine modification is found at Lys135. The active site involves Asp272. Substrate-binding positions include His276 and 286–287; that span reads AG.

The protein belongs to the metallo-dependent hydrolases superfamily. DHOase family. Class I DHOase subfamily. Requires Zn(2+) as cofactor.

It carries out the reaction (S)-dihydroorotate + H2O = N-carbamoyl-L-aspartate + H(+). The protein operates within pyrimidine metabolism; UMP biosynthesis via de novo pathway; (S)-dihydroorotate from bicarbonate: step 3/3. Its function is as follows. Catalyzes the reversible cyclization of carbamoyl aspartate to dihydroorotate. The protein is Dihydroorotase of Pyrococcus furiosus (strain ATCC 43587 / DSM 3638 / JCM 8422 / Vc1).